The chain runs to 247 residues: uncharacterized protein (247 aa).

3 helical membrane passes run 108 to 128 (WYIN…FLII), 136 to 156 (IFSV…NIIC), and 194 to 214 (GAKL…LFFI).

The protein localises to the membrane. This is an uncharacterized protein from Caenorhabditis elegans.